A 481-amino-acid polypeptide reads, in one-letter code: Adenosylhomocysteinase (481 aa).

The substrate site is built by threonine 65, aspartate 140, and glutamate 200. 201 to 203 (TTT) is a binding site for NAD(+). Positions 230 and 234 each coordinate substrate. NAD(+) contacts are provided by residues asparagine 235, 264 to 269 (GYGDVG), glutamate 287, asparagine 322, 343 to 345 (IGH), and asparagine 393.

The protein belongs to the adenosylhomocysteinase family. Requires NAD(+) as cofactor.

The protein localises to the cytoplasm. It catalyses the reaction S-adenosyl-L-homocysteine + H2O = L-homocysteine + adenosine. Its pathway is amino-acid biosynthesis; L-homocysteine biosynthesis; L-homocysteine from S-adenosyl-L-homocysteine: step 1/1. Functionally, may play a key role in the regulation of the intracellular concentration of adenosylhomocysteine. The chain is Adenosylhomocysteinase from Polynucleobacter necessarius subsp. necessarius (strain STIR1).